Here is a 276-residue protein sequence, read N- to C-terminus: D-aminoacyl-tRNA deacylase (276 aa).

Belongs to the DtdA deacylase family. Monomer. It depends on Zn(2+) as a cofactor.

The catalysed reaction is a D-aminoacyl-tRNA + H2O = a tRNA + a D-alpha-amino acid + H(+). The enzyme catalyses glycyl-tRNA(Ala) + H2O = tRNA(Ala) + glycine + H(+). Functionally, D-aminoacyl-tRNA deacylase with broad substrate specificity. By recycling D-aminoacyl-tRNA to D-amino acids and free tRNA molecules, this enzyme counteracts the toxicity associated with the formation of D-aminoacyl-tRNA entities in vivo. The polypeptide is D-aminoacyl-tRNA deacylase (Staphylothermus marinus (strain ATCC 43588 / DSM 3639 / JCM 9404 / F1)).